A 194-amino-acid chain; its full sequence is Glycerol-3-phosphate acyltransferase (194 aa).

The next 5 helical transmembrane spans lie at 7 to 27 (LLMA…YWVC), 59 to 79 (LTLF…AMLG), 86 to 106 (GVTA…HFKG), 116 to 136 (AGLA…AAVV), and 157 to 177 (AWRL…FILI).

Belongs to the PlsY family. In terms of assembly, probably interacts with PlsX.

Its subcellular location is the cell inner membrane. The enzyme catalyses an acyl phosphate + sn-glycerol 3-phosphate = a 1-acyl-sn-glycero-3-phosphate + phosphate. It participates in lipid metabolism; phospholipid metabolism. Catalyzes the transfer of an acyl group from acyl-phosphate (acyl-PO(4)) to glycerol-3-phosphate (G3P) to form lysophosphatidic acid (LPA). This enzyme utilizes acyl-phosphate as fatty acyl donor, but not acyl-CoA or acyl-ACP. The chain is Glycerol-3-phosphate acyltransferase from Hahella chejuensis (strain KCTC 2396).